Reading from the N-terminus, the 172-residue chain is Adenine phosphoribosyltransferase (172 aa).

It belongs to the purine/pyrimidine phosphoribosyltransferase family. Homodimer.

Its subcellular location is the cytoplasm. It carries out the reaction AMP + diphosphate = 5-phospho-alpha-D-ribose 1-diphosphate + adenine. It functions in the pathway purine metabolism; AMP biosynthesis via salvage pathway; AMP from adenine: step 1/1. Catalyzes a salvage reaction resulting in the formation of AMP, that is energically less costly than de novo synthesis. The sequence is that of Adenine phosphoribosyltransferase from Desulforamulus reducens (strain ATCC BAA-1160 / DSM 100696 / MI-1) (Desulfotomaculum reducens).